The sequence spans 266 residues: 4-hydroxy-tetrahydrodipicolinate reductase (266 aa).

NAD(+) is bound by residues 7–12, E33, 96–98, and 120–123; these read GTIGRM, GTT, and APNM. The active-site Proton donor/acceptor is the H153. Position 154 (H154) interacts with (S)-2,3,4,5-tetrahydrodipicolinate. K157 serves as the catalytic Proton donor. 163–164 is a (S)-2,3,4,5-tetrahydrodipicolinate binding site; the sequence is GT.

This sequence belongs to the DapB family.

The protein localises to the cytoplasm. The catalysed reaction is (S)-2,3,4,5-tetrahydrodipicolinate + NAD(+) + H2O = (2S,4S)-4-hydroxy-2,3,4,5-tetrahydrodipicolinate + NADH + H(+). It carries out the reaction (S)-2,3,4,5-tetrahydrodipicolinate + NADP(+) + H2O = (2S,4S)-4-hydroxy-2,3,4,5-tetrahydrodipicolinate + NADPH + H(+). It functions in the pathway amino-acid biosynthesis; L-lysine biosynthesis via DAP pathway; (S)-tetrahydrodipicolinate from L-aspartate: step 4/4. Catalyzes the conversion of 4-hydroxy-tetrahydrodipicolinate (HTPA) to tetrahydrodipicolinate. This chain is 4-hydroxy-tetrahydrodipicolinate reductase, found in Polynucleobacter necessarius subsp. necessarius (strain STIR1).